Here is a 194-residue protein sequence, read N- to C-terminus: Oligoribonuclease (194 aa).

Positions 11 to 174 (LIWIDLEMTG…SDVRDSIDEL (164 aa)) constitute an Exonuclease domain. The active site involves tyrosine 132.

It belongs to the oligoribonuclease family.

The protein resides in the cytoplasm. Its function is as follows. 3'-to-5' exoribonuclease specific for small oligoribonucleotides. This is Oligoribonuclease from Xanthomonas axonopodis pv. citri (strain 306).